The sequence spans 345 residues: Isopentenyl-diphosphate delta-isomerase (345 aa).

14 to 15 (RK) contacts substrate. Residues Ser-71, 72 to 74 (SMT), Ser-102, and Asn-130 contribute to the FMN site. A substrate-binding site is contributed by 102 to 104 (SMR). Gln-165 contributes to the substrate binding site. Glu-166 provides a ligand contact to Mg(2+). Residues Lys-197, Thr-227, 277-279 (GLK), and 298-299 (AG) contribute to the FMN site.

This sequence belongs to the IPP isomerase type 2 family. In terms of assembly, homooctamer. Dimer of tetramers. It depends on FMN as a cofactor. NADPH serves as cofactor. The cofactor is Mg(2+).

It localises to the cytoplasm. The enzyme catalyses isopentenyl diphosphate = dimethylallyl diphosphate. Involved in the biosynthesis of isoprenoids. Catalyzes the 1,3-allylic rearrangement of the homoallylic substrate isopentenyl (IPP) to its allylic isomer, dimethylallyl diphosphate (DMAPP). In Rickettsia felis (strain ATCC VR-1525 / URRWXCal2) (Rickettsia azadi), this protein is Isopentenyl-diphosphate delta-isomerase.